A 116-amino-acid chain; its full sequence is Large ribosomal subunit protein bL19 (116 aa).

It belongs to the bacterial ribosomal protein bL19 family.

Its function is as follows. This protein is located at the 30S-50S ribosomal subunit interface and may play a role in the structure and function of the aminoacyl-tRNA binding site. The polypeptide is Large ribosomal subunit protein bL19 (Chloroflexus aurantiacus (strain ATCC 29366 / DSM 635 / J-10-fl)).